The primary structure comprises 87 residues: Mitochondrial import inner membrane translocase subunit TIM8 (87 aa).

The Twin CX3C motif motif lies at 44 to 68; that stretch reads CFKKCVESVNDSNLSSQEEQCLSNC. Disulfide bonds link Cys44/Cys68 and Cys48/Cys64.

This sequence belongs to the small Tim family. As to quaternary structure, heterohexamer; composed of 3 copies of TIM8 and 3 copies of TIM13, named soluble 70 kDa complex. Associates with the TIM22 complex, whose core is composed of TIM18, TIM22 and TIM54. Interacts with the transmembrane regions of multi-pass transmembrane proteins in transit.

The protein localises to the mitochondrion inner membrane. It localises to the mitochondrion intermembrane space. Its function is as follows. Mitochondrial intermembrane chaperone that participates in the import and insertion of some multi-pass transmembrane proteins into the mitochondrial inner membrane. Also required for the transfer of beta-barrel precursors from the TOM complex to the sorting and assembly machinery (SAM complex) of the outer membrane. Acts as a chaperone-like protein that protects the hydrophobic precursors from aggregation and guide them through the mitochondrial intermembrane space. The TIM8-TIM13 complex is non essential and only mediates the import of few proteins under precise conditions, while the predominant TIM9-TIM10 70 kDa complex is crucial and mediates the import of much more proteins. Strictly required for import of TIM23 in some conditions, when a low membrane potential exists in the mitochondria. The protein is Mitochondrial import inner membrane translocase subunit TIM8 (TIM8) of Saccharomyces cerevisiae (strain ATCC 204508 / S288c) (Baker's yeast).